Consider the following 500-residue polypeptide: Cytochrome P450 2D14 (500 aa).

Cys-446 contributes to the heme binding site.

Belongs to the cytochrome P450 family. Requires heme as cofactor.

It localises to the endoplasmic reticulum membrane. The protein resides in the microsome membrane. It catalyses the reaction an organic molecule + reduced [NADPH--hemoprotein reductase] + O2 = an alcohol + oxidized [NADPH--hemoprotein reductase] + H2O + H(+). In terms of biological role, cytochromes P450 are a group of heme-thiolate monooxygenases. In liver microsomes, this enzyme is involved in an NADPH-dependent electron transport pathway. It oxidizes a variety of structurally unrelated compounds, including steroids, fatty acids, and xenobiotics. The polypeptide is Cytochrome P450 2D14 (CYP2D14) (Bos taurus (Bovine)).